Consider the following 30-residue polypeptide: SEIPQPSLDFEQFSNMIQCTIPPGEECLAY.

As to quaternary structure, heterotrimer of alpha, beta, and gamma chains; non-covalently linked. Post-translationally, glycosylated. As to expression, expressed by the venom gland.

The protein localises to the secreted. In terms of biological role, heterotrimer: Snake venom phospholipase A2 (PLA2) heterotrimer that acts as a potent presynaptic neurotoxin by blocking synaptic transmission and synaptic vesicle recycling. Enzymatic activity is essential for the neurotoxic effects. May act by binding in a calcium-dependent fashion to neurotonal pentraxin-1 (NPTX1) and neurotonal pentraxin-2 (NPTX2), but not to neuronal pentraxin receptor (NPTXR). Also binds to taipoxin-associated calcium binding protein 49 (RCN2), a protein localized in the lumen of endoplasmic reticulum. Functionally, monomer (gamma chain): Snake venom phospholipase A2 homolog that is neither toxic nor enzymatically active. Does not bind calcium. The polypeptide is Acidic phospholipase A2 homolog cannitoxin gamma chain (Oxyuranus scutellatus canni (Papuan taipan)).